Reading from the N-terminus, the 122-residue chain is Large ribosomal subunit protein uL22 (122 aa).

The tract at residues 102–122 (VAEGKEMKSSKSHKKNQAEGK) is disordered.

Belongs to the universal ribosomal protein uL22 family. Part of the 50S ribosomal subunit.

This protein binds specifically to 23S rRNA; its binding is stimulated by other ribosomal proteins, e.g. L4, L17, and L20. It is important during the early stages of 50S assembly. It makes multiple contacts with different domains of the 23S rRNA in the assembled 50S subunit and ribosome. Its function is as follows. The globular domain of the protein is located near the polypeptide exit tunnel on the outside of the subunit, while an extended beta-hairpin is found that lines the wall of the exit tunnel in the center of the 70S ribosome. The chain is Large ribosomal subunit protein uL22 from Helicobacter pylori (strain G27).